Reading from the N-terminus, the 300-residue chain is Probable phytol kinase, chloroplastic (300 aa).

Residues 1–36 constitute a chloroplast transit peptide; the sequence is MAAARPALPSSPTSLLLARSTSAPDLAARRPRRWLV. A run of 7 helical transmembrane segments spans residues 60–78, 98–118, 122–142, 168–188, 227–247, 254–274, and 276–296; these read LLRDGGATLLVTAGAYSLV, VVHVLSGVFFMASWPLFSNST, FFAAVVPFLNCVRLLTYGLGF, YVIVLLIIVLVFWRDSPIGIV, FISGFLLSALMLSYFSWLGYI, ALGKLVLVALAATVVECIPVT, and VVDDNISVPLATMLVAFLLFG.

It belongs to the polyprenol kinase family.

Its subcellular location is the plastid. It localises to the chloroplast membrane. The enzyme catalyses phytol + CTP = phytyl phosphate + CDP + H(+). It participates in cofactor biosynthesis; tocopherol biosynthesis. Involved in the activation and reutilization of phytol from chlorophyll degradation in plant metabolism, including tocopherol biosynthesis. Catalyzes the conversion of phytol to phytol monophosphate (PMP). The polypeptide is Probable phytol kinase, chloroplastic (Triticum aestivum (Wheat)).